A 397-amino-acid polypeptide reads, in one-letter code: Argininosuccinate synthase (397 aa).

Residue 8–16 (AYSGGLDTS) coordinates ATP. Residues Tyr86 and Ser91 each contribute to the L-citrulline site. Gly116 contacts ATP. Positions 118, 122, and 123 each coordinate L-aspartate. Asn122 contributes to the L-citrulline binding site. Residues Arg126, Ser175, Ser184, Glu260, and Tyr272 each coordinate L-citrulline.

The protein belongs to the argininosuccinate synthase family. Type 1 subfamily. In terms of assembly, homotetramer.

The protein resides in the cytoplasm. The enzyme catalyses L-citrulline + L-aspartate + ATP = 2-(N(omega)-L-arginino)succinate + AMP + diphosphate + H(+). Its pathway is amino-acid biosynthesis; L-arginine biosynthesis; L-arginine from L-ornithine and carbamoyl phosphate: step 2/3. This is Argininosuccinate synthase from Clostridium botulinum (strain Okra / Type B1).